The following is a 226-amino-acid chain: LIM domain-containing protein PLIM2a (226 aa).

2 consecutive LIM zinc-binding domains span residues 8–68 and 104–164; these read DKCK…LFKE and DKCA…LFLE. The segment at 173–226 is disordered; sequence QAAANHRRSASSGGASPPSDDHKPDDTASIPEAKEDDAAPEAAGEEEPEPVVES. A compositionally biased stretch (basic and acidic residues) spans 191–209; sequence SDDHKPDDTASIPEAKEDD. Residues 210-226 show a composition bias toward acidic residues; that stretch reads AAPEAAGEEEPEPVVES.

As to quaternary structure, interacts with F-actin. Predominantly expressed in flowers, in the tapetum and in pollen grains. Detected in leaves and stems.

The protein resides in the cytoplasm. It is found in the cytoskeleton. Functionally, binds to actin filaments and promotes cross-linking into thick bundles. Has an actin-stabilizing activity. The actin regulatory activities are inhibited by pH &gt; 6.8 but are [Ca(2+)] independent. The polypeptide is LIM domain-containing protein PLIM2a (Arabidopsis thaliana (Mouse-ear cress)).